The chain runs to 251 residues: Hydroxyacylglutathione hydrolase (251 aa).

7 residues coordinate Zn(2+): His53, His55, Asp57, His58, His110, Asp127, and His165.

This sequence belongs to the metallo-beta-lactamase superfamily. Glyoxalase II family. As to quaternary structure, monomer. Zn(2+) is required as a cofactor.

It catalyses the reaction an S-(2-hydroxyacyl)glutathione + H2O = a 2-hydroxy carboxylate + glutathione + H(+). The protein operates within secondary metabolite metabolism; methylglyoxal degradation; (R)-lactate from methylglyoxal: step 2/2. Thiolesterase that catalyzes the hydrolysis of S-D-lactoyl-glutathione to form glutathione and D-lactic acid. This Yersinia pestis (strain Pestoides F) protein is Hydroxyacylglutathione hydrolase.